The following is a 36-amino-acid chain: Photosystem I reaction center subunit VIII (36 aa).

Residues 6–28 (LPSIFVPLVGLLFPAIAMVSLFF) traverse the membrane as a helical segment.

Belongs to the PsaI family.

It is found in the plastid. The protein resides in the chloroplast thylakoid membrane. Its function is as follows. May help in the organization of the PsaL subunit. This Nymphaea alba (White water-lily) protein is Photosystem I reaction center subunit VIII.